A 563-amino-acid chain; its full sequence is Adenine deaminase (563 aa).

Belongs to the metallo-dependent hydrolases superfamily. Adenine deaminase family. Mn(2+) serves as cofactor.

It catalyses the reaction adenine + H2O + H(+) = hypoxanthine + NH4(+). The sequence is that of Adenine deaminase from Lactiplantibacillus plantarum (strain ATCC BAA-793 / NCIMB 8826 / WCFS1) (Lactobacillus plantarum).